The sequence spans 166 residues: MLELDLQVASETSAPDEARLRLWCEMGLRQRSADSELTIRLVDETEGRELNNTWRHKNYATNVLSFPADVPDDMLDIPLLGDLVICVPVVNREAVEQGKSVDAHWAHMVIHGCLHLLGYDHIDDEEAEEMEALERTLLEELGYPDPYADDESADPPHSDTPSKDHE.

Zn(2+) contacts are provided by His-111, His-115, and His-121. Residues 140-166 form a disordered region; the sequence is ELGYPDPYADDESADPPHSDTPSKDHE. Over residues 154-166 the composition is skewed to basic and acidic residues; sequence DPPHSDTPSKDHE.

The protein belongs to the endoribonuclease YbeY family. Zn(2+) serves as cofactor.

Its subcellular location is the cytoplasm. Single strand-specific metallo-endoribonuclease involved in late-stage 70S ribosome quality control and in maturation of the 3' terminus of the 16S rRNA. The sequence is that of Endoribonuclease YbeY from Pseudomonas syringae pv. syringae (strain B728a).